Reading from the N-terminus, the 267-residue chain is Syntaxin-72 (267 aa).

Residues 1 to 244 (MPVIDIIFRV…QLVQMRSSRN (244 aa)) lie on the Cytoplasmic side of the membrane. Residues 53–87 (KAELASTEKNRAAAVAMNAEVRRTKARLAEDVVKL) adopt a coiled-coil conformation. The 63-residue stretch at 173–235 (EMRRKKQDEG…KNTNVRLKKQ (63 aa)) folds into the t-SNARE coiled-coil homology domain. Residues 245–265 (FCIDIILLCVILGIVSYIYNA) form a helical; Anchor for type IV membrane protein membrane-spanning segment. Topologically, residues 266–267 (LN) are vesicular.

The protein belongs to the syntaxin family. As to quaternary structure, part of the t-SNARE complex. As to expression, expressed in root, leaf, stem, flower and silique.

The protein localises to the membrane. In terms of biological role, vesicle trafficking protein that functions in the secretory pathway. This is Syntaxin-72 (SYP72) from Arabidopsis thaliana (Mouse-ear cress).